The following is a 212-amino-acid chain: MQLFHLCLIISCSCPTVQASKLCLGWLWGMDIDPYKEFGASVELFSFLASDFFPSVRDLLDTASALYRDALESPEHCTPNHTALRQAILCWGELMTLASWVGNNLEDPAARDLVVNYVNTNMGLKIRQLLWFHISCLTFGRETVLEYLVSFGVWIRTPPAYRPPNAPILSTLPETTVVRRRGRSPRRRTPSPRRRRSQSPRRRRSQSPASQC.

An N-terminal signal peptide occupies residues 1-19 (MQLFHLCLIISCSCPTVQA). The segment at 25 to 27 (GWL) is HBEAG. The interval 165 to 212 (NAPILSTLPETTVVRRRGRSPRRRTPSPRRRRSQSPRRRRSQSPASQC) is disordered. Positions 178–205 (VRRRGRSPRRRTPSPRRRRSQSPRRRRS) are enriched in basic residues. One copy of the 1; half-length repeat lies at 184–190 (SPRRRTP). The tract at residues 184-206 (SPRRRTPSPRRRRSQSPRRRRSQ) is 3 X 8 AA repeats of S-P-R-R-R-R-S-Q. Positions 184-212 (SPRRRTPSPRRRRSQSPRRRRSQSPASQC) are excised as a propeptide. Repeat copies occupy residues 191-198 (SPRRRRSQ) and 199-206 (SPRRRRSQ).

It belongs to the orthohepadnavirus precore antigen family. In terms of assembly, homodimerizes. In terms of processing, phosphorylated. Post-translationally, cleaved by host furin.

It is found in the secreted. Its subcellular location is the host nucleus. Its function is as follows. May regulate immune response to the intracellular capsid in acting as a T-cell tolerogen, by having an immunoregulatory effect which prevents destruction of infected cells by cytotoxic T-cells. This immune regulation may predispose to chronicity during perinatal infections and prevent severe liver injury during adult infections. The protein is External core antigen of Hepatitis B virus genotype F2 subtype adw4q (isolate Senegal/9203) (HBV-F).